The sequence spans 208 residues: Predicted GPI-anchored protein 37 (208 aa).

The signal sequence occupies residues M1–S18. The interval T33–W93 is disordered. The span at L36–S53 shows a compositional bias: gly residues. The segment covering S54–G63 has biased composition (low complexity). N173 is a glycosylation site (N-linked (GlcNAc...) asparagine). S185 carries the GPI-anchor amidated serine lipid modification. A propeptide spans S186–L208 (removed in mature form).

This sequence belongs to the PGA37 family.

The protein localises to the cell membrane. Functionally, predicted GPI-anchored protein which may have a role during host infection. In Candida albicans (strain SC5314 / ATCC MYA-2876) (Yeast), this protein is Predicted GPI-anchored protein 37 (PGA37).